We begin with the raw amino-acid sequence, 206 residues long: FMN-dependent NADH:quinone oxidoreductase (206 aa).

Residues Ser-10, 16–18 (SSS), 93–96 (MYNF), and 137–140 (TRGG) contribute to the FMN site.

Belongs to the azoreductase type 1 family. As to quaternary structure, homodimer. The cofactor is FMN.

The enzyme catalyses 2 a quinone + NADH + H(+) = 2 a 1,4-benzosemiquinone + NAD(+). It carries out the reaction N,N-dimethyl-1,4-phenylenediamine + anthranilate + 2 NAD(+) = 2-(4-dimethylaminophenyl)diazenylbenzoate + 2 NADH + 2 H(+). Its function is as follows. Quinone reductase that provides resistance to thiol-specific stress caused by electrophilic quinones. Functionally, also exhibits azoreductase activity. Catalyzes the reductive cleavage of the azo bond in aromatic azo compounds to the corresponding amines. This is FMN-dependent NADH:quinone oxidoreductase from Psychromonas ingrahamii (strain DSM 17664 / CCUG 51855 / 37).